Here is a 342-residue protein sequence, read N- to C-terminus: Dihydroorotate dehydrogenase (quinone) (342 aa).

FMN is bound by residues 61 to 65 and Thr85; that span reads AGLDK. Position 65 (Lys65) interacts with substrate. Residue 110-114 participates in substrate binding; the sequence is NRMGF. Residues Asn138 and Asn171 each contribute to the FMN site. Asn171 contributes to the substrate binding site. Residue Ser174 is the Nucleophile of the active site. Residue Asn176 coordinates substrate. The FMN site is built by Lys216 and Thr244. Substrate is bound at residue 245–246; sequence NT. Residues Gly267, Gly296, and 317-318 each bind FMN; that span reads YS.

Belongs to the dihydroorotate dehydrogenase family. Type 2 subfamily. Monomer. FMN is required as a cofactor.

The protein localises to the cell membrane. It catalyses the reaction (S)-dihydroorotate + a quinone = orotate + a quinol. It participates in pyrimidine metabolism; UMP biosynthesis via de novo pathway; orotate from (S)-dihydroorotate (quinone route): step 1/1. Catalyzes the conversion of dihydroorotate to orotate with quinone as electron acceptor. This Pseudomonas aeruginosa (strain LESB58) protein is Dihydroorotate dehydrogenase (quinone).